A 194-amino-acid polypeptide reads, in one-letter code: Fimbrial protein 987P (194 aa).

A signal peptide spans 1 to 23 (MRMKKSALTLAVLSSLFSGYSLA). Cysteine 46 and cysteine 85 form a disulfide bridge.

This sequence belongs to the fimbrial protein family.

It localises to the fimbrium. This is Fimbrial protein 987P (fasA) from Escherichia coli.